A 341-amino-acid chain; its full sequence is S-adenosylmethionine:tRNA ribosyltransferase-isomerase (341 aa).

It belongs to the QueA family. As to quaternary structure, monomer.

The protein resides in the cytoplasm. It carries out the reaction 7-aminomethyl-7-carbaguanosine(34) in tRNA + S-adenosyl-L-methionine = epoxyqueuosine(34) in tRNA + adenine + L-methionine + 2 H(+). The protein operates within tRNA modification; tRNA-queuosine biosynthesis. In terms of biological role, transfers and isomerizes the ribose moiety from AdoMet to the 7-aminomethyl group of 7-deazaguanine (preQ1-tRNA) to give epoxyqueuosine (oQ-tRNA). In Clostridioides difficile (strain 630) (Peptoclostridium difficile), this protein is S-adenosylmethionine:tRNA ribosyltransferase-isomerase.